Consider the following 266-residue polypeptide: Glucosamine-6-phosphate deaminase (266 aa).

Residue D72 is the Proton acceptor; for enolization step of the active site. D141 functions as the For ring-opening step in the catalytic mechanism. The active-site Proton acceptor; for ring-opening step is the H143. The active-site For ring-opening step is E148.

This sequence belongs to the glucosamine/galactosamine-6-phosphate isomerase family. NagB subfamily. As to quaternary structure, homohexamer.

The catalysed reaction is alpha-D-glucosamine 6-phosphate + H2O = beta-D-fructose 6-phosphate + NH4(+). It participates in amino-sugar metabolism; N-acetylneuraminate degradation; D-fructose 6-phosphate from N-acetylneuraminate: step 5/5. Its activity is regulated as follows. Allosterically activated by N-acetylglucosamine 6-phosphate (GlcNAc6P). Its function is as follows. Catalyzes the reversible isomerization-deamination of glucosamine 6-phosphate (GlcN6P) to form fructose 6-phosphate (Fru6P) and ammonium ion. This is Glucosamine-6-phosphate deaminase from Salmonella arizonae (strain ATCC BAA-731 / CDC346-86 / RSK2980).